Here is a 103-residue protein sequence, read N- to C-terminus: ATP synthase subunit H, mitochondrial (103 aa).

The N-terminal 26 residues, 1-26, are a transit peptide targeting the mitochondrion; that stretch reads MSRILKSLSRSYSTTSPRLYVDVVQG.

The protein belongs to the ATPase h subunit family. In terms of assembly, F-type ATPases have 2 components, CF(1) - the catalytic core - and CF(0) - the membrane proton channel.

It localises to the mitochondrion. Its subcellular location is the mitochondrion inner membrane. Functionally, mitochondrial membrane ATP synthase (F(1)F(0) ATP synthase or Complex V) produces ATP from ADP in the presence of a proton gradient across the membrane which is generated by electron transport complexes of the respiratory chain. F-type ATPases consist of two structural domains, F(1) - containing the extramembraneous catalytic core and F(0) - containing the membrane proton channel, linked together by a central stalk and a peripheral stalk. During catalysis, ATP synthesis in the catalytic domain of F(1) is coupled via a rotary mechanism of the central stalk subunits to proton translocation. Part of the complex F(0) domain. Minor subunit located with subunit a in the membrane. This chain is ATP synthase subunit H, mitochondrial (atp14), found in Schizosaccharomyces pombe (strain 972 / ATCC 24843) (Fission yeast).